Reading from the N-terminus, the 264-residue chain is Small ribosomal subunit protein mS23 (264 aa).

Positions 233 to 264 (ARTSNPAGSWKDDTTLNTAQEEESTTSENLHF) are disordered.

It belongs to the mitochondrion-specific ribosomal protein mS23 family. Component of the mitochondrial small ribosomal subunit. Mature mitochondrial ribosomes consist of a small (37S) and a large (54S) subunit. The 37S subunit contains at least 33 different proteins and 1 molecule of RNA (15S). The 54S subunit contains at least 45 different proteins and 1 molecule of RNA (21S).

The protein resides in the mitochondrion. The chain is Small ribosomal subunit protein mS23 (RSM25) from Saccharomyces cerevisiae (strain YJM789) (Baker's yeast).